A 70-amino-acid chain; its full sequence is DNA-directed RNA polymerase subunit omega (70 aa).

Belongs to the RNA polymerase subunit omega family. As to quaternary structure, the RNAP catalytic core consists of 2 alpha, 1 beta, 1 beta' and 1 omega subunit. When a sigma factor is associated with the core the holoenzyme is formed, which can initiate transcription.

The catalysed reaction is RNA(n) + a ribonucleoside 5'-triphosphate = RNA(n+1) + diphosphate. In terms of biological role, promotes RNA polymerase assembly. Latches the N- and C-terminal regions of the beta' subunit thereby facilitating its interaction with the beta and alpha subunits. This is DNA-directed RNA polymerase subunit omega from Bacillus mycoides (strain KBAB4) (Bacillus weihenstephanensis).